A 449-amino-acid chain; its full sequence is Phosphoglucosamine mutase (449 aa).

The Phosphoserine intermediate role is filled by Ser-100. The Mg(2+) site is built by Ser-100, Asp-241, Asp-243, and Asp-245. At Ser-100 the chain carries Phosphoserine.

Belongs to the phosphohexose mutase family. Requires Mg(2+) as cofactor. Activated by phosphorylation.

It catalyses the reaction alpha-D-glucosamine 1-phosphate = D-glucosamine 6-phosphate. Functionally, catalyzes the conversion of glucosamine-6-phosphate to glucosamine-1-phosphate. The chain is Phosphoglucosamine mutase from Geobacillus kaustophilus (strain HTA426).